Reading from the N-terminus, the 199-residue chain is Peptidyl-tRNA hydrolase (199 aa).

Tyr25 lines the tRNA pocket. The active-site Proton acceptor is His30. The tRNA site is built by Tyr76, Asn78, and Asn124.

It belongs to the PTH family. Monomer.

It is found in the cytoplasm. The catalysed reaction is an N-acyl-L-alpha-aminoacyl-tRNA + H2O = an N-acyl-L-amino acid + a tRNA + H(+). Its function is as follows. Hydrolyzes ribosome-free peptidyl-tRNAs (with 1 or more amino acids incorporated), which drop off the ribosome during protein synthesis, or as a result of ribosome stalling. Catalyzes the release of premature peptidyl moieties from peptidyl-tRNA molecules trapped in stalled 50S ribosomal subunits, and thus maintains levels of free tRNAs and 50S ribosomes. In Mycobacterium leprae (strain Br4923), this protein is Peptidyl-tRNA hydrolase.